Reading from the N-terminus, the 363-residue chain is tRNA U34 carboxymethyltransferase (363 aa).

Carboxy-S-adenosyl-L-methionine is bound by residues K101, W134, K139, G159, 181–183 (DPS), 221–222 (LE), M237, Y241, and R356.

It belongs to the class I-like SAM-binding methyltransferase superfamily. CmoB family. As to quaternary structure, homotetramer.

It carries out the reaction carboxy-S-adenosyl-L-methionine + 5-hydroxyuridine(34) in tRNA = 5-carboxymethoxyuridine(34) in tRNA + S-adenosyl-L-homocysteine + H(+). Catalyzes carboxymethyl transfer from carboxy-S-adenosyl-L-methionine (Cx-SAM) to 5-hydroxyuridine (ho5U) to form 5-carboxymethoxyuridine (cmo5U) at position 34 in tRNAs. The polypeptide is tRNA U34 carboxymethyltransferase (Psychrobacter cryohalolentis (strain ATCC BAA-1226 / DSM 17306 / VKM B-2378 / K5)).